An 88-amino-acid chain; its full sequence is MQACMVPGLALCLLLGSLTEAKPLQEYDPYAEPPAMPYWPFSTSDFWNYIQYLQTQGAYPQVEDLARTFFAHFPLGSTLGFHVPYQED.

The N-terminal stretch at 1–21 is a signal peptide; sequence MQACMVPGLALCLLLGSLTEA.

This sequence belongs to the otospiralin family. Ear specific.

The protein resides in the secreted. May be essential for the survival of the neurosensory epithelium of the inner ear. In Cavia porcellus (Guinea pig), this protein is Otospiralin (OTOS).